Here is a 93-residue protein sequence, read N- to C-terminus: Exodeoxyribonuclease 7 small subunit (93 aa).

Over residues 1-17 (MAKSSASSLSSAKPVAA) the composition is skewed to low complexity. The interval 1–22 (MAKSSASSLSSAKPVAAGPDAS) is disordered.

Belongs to the XseB family. As to quaternary structure, heterooligomer composed of large and small subunits.

Its subcellular location is the cytoplasm. It carries out the reaction Exonucleolytic cleavage in either 5'- to 3'- or 3'- to 5'-direction to yield nucleoside 5'-phosphates.. Bidirectionally degrades single-stranded DNA into large acid-insoluble oligonucleotides, which are then degraded further into small acid-soluble oligonucleotides. In Polaromonas naphthalenivorans (strain CJ2), this protein is Exodeoxyribonuclease 7 small subunit.